An 89-amino-acid polypeptide reads, in one-letter code: Thoeris anti-defense 2 (89 aa).

Tryptophan 25 and asparagine 26 together coordinate 3'cADPR. Serine 42 provides a ligand contact to Mg(2+). The 3'cADPR site is built by tryptophan 73 and aspartate 79.

In terms of assembly, homotetramer.

Its function is as follows. Counteracts the host Thoeris antiviral defense system. Probably acts by binding and sequestering cyclic ADP-D-ribose signal molecules produced upon viral infection (3'cADPR or 2'cADPR); sequestration prevents the signal from activating the ThsA of the Thoeris antiviral defense system. This chain is Thoeris anti-defense 2, found in Bacillus phage SP01 (Bacteriophage SP01).